The following is a 467-amino-acid chain: Fumarate hydratase class II (467 aa).

Residues 98-100 (SGT), Arg-126, 129-132 (HPND), 139-141 (SSN), and Thr-187 contribute to the substrate site. The active-site Proton donor/acceptor is the His-188. The active site involves Ser-318. Substrate is bound by residues Ser-319 and 324–326 (KVN).

This sequence belongs to the class-II fumarase/aspartase family. Fumarase subfamily. In terms of assembly, homotetramer.

It localises to the cytoplasm. It catalyses the reaction (S)-malate = fumarate + H2O. It participates in carbohydrate metabolism; tricarboxylic acid cycle; (S)-malate from fumarate: step 1/1. Involved in the TCA cycle. Catalyzes the stereospecific interconversion of fumarate to L-malate. The polypeptide is Fumarate hydratase class II (Escherichia coli O6:H1 (strain CFT073 / ATCC 700928 / UPEC)).